We begin with the raw amino-acid sequence, 336 residues long: TBC1 domain family member 21 (336 aa).

The 209-residue stretch at 57–265 folds into the Rab-GAP TBC domain; sequence GLHPFVRTEA…RLWEVLLTGK (209 aa).

Interacts with ACTB. Interacts with ARMC12, TOMM20, DNAH7 and RAP1A. Interacts with RAB10. In terms of tissue distribution, expressed in round and elongated spermatids (at protein level). Expressed specifically in adult testis and very weakly in fetal brain.

It localises to the cytoplasmic vesicle. The protein localises to the secretory vesicle. It is found in the acrosome. The protein resides in the cytoplasm. Its subcellular location is the cytoskeleton. Functionally, acts as a GTPase-activating protein for Rab family protein(s). Essential for the establishment of male fertility, and is required for both the production of normal sperm number and sperm function. Plays an important role in the formation of intact mitochondria, outer dense fibers and axoneme within the sperm tail. Essential for sperm mitochondrial sheath formation and for the interactions of ARMC12 with VDAC2 and VDAC3. May be involved in acrosome formation and cytoskeletal reorganization during spermiogenesis, possibly by regulating RAB3A activity. The polypeptide is TBC1 domain family member 21 (TBC1D21) (Homo sapiens (Human)).